Consider the following 333-residue polypeptide: Protoheme IX farnesyltransferase (333 aa).

7 helical membrane passes run 64–84 (LICT…LNCL), 110–130 (TVFL…VSGV), 133–153 (LAAG…TVIL), 161–181 (IVFG…AATG), 189–209 (WLFG…AILL), 246–266 (IMGV…LLPF), and 287–307 (AKSL…LLLI).

The protein belongs to the UbiA prenyltransferase family. Protoheme IX farnesyltransferase subfamily.

The protein resides in the cell inner membrane. It carries out the reaction heme b + (2E,6E)-farnesyl diphosphate + H2O = Fe(II)-heme o + diphosphate. Its pathway is porphyrin-containing compound metabolism; heme O biosynthesis; heme O from protoheme: step 1/1. Converts heme B (protoheme IX) to heme O by substitution of the vinyl group on carbon 2 of heme B porphyrin ring with a hydroxyethyl farnesyl side group. The chain is Protoheme IX farnesyltransferase from Prochlorococcus marinus (strain AS9601).